The primary structure comprises 164 residues: S-ribosylhomocysteine lyase (164 aa).

His61, His65, and Cys131 together coordinate Fe cation.

It belongs to the LuxS family. Homodimer. The cofactor is Fe cation.

The catalysed reaction is S-(5-deoxy-D-ribos-5-yl)-L-homocysteine = (S)-4,5-dihydroxypentane-2,3-dione + L-homocysteine. Involved in the synthesis of autoinducer 2 (AI-2) which is secreted by bacteria and is used to communicate both the cell density and the metabolic potential of the environment. The regulation of gene expression in response to changes in cell density is called quorum sensing. Catalyzes the transformation of S-ribosylhomocysteine (RHC) to homocysteine (HC) and 4,5-dihydroxy-2,3-pentadione (DPD). This is S-ribosylhomocysteine lyase from Bifidobacterium longum (strain DJO10A).